The following is a 931-amino-acid chain: Ribosome-releasing factor 2, mitochondrial (931 aa).

One can recognise a tr-type G domain in the interval 63–379; that stretch reads EKTRNIGIIA…AVNNLLPGPS (317 aa). GTP is bound by residues 72–79, 162–166, and 216–219; these read AHIDAGKT, DTPGH, and NKLD.

This sequence belongs to the TRAFAC class translation factor GTPase superfamily. Classic translation factor GTPase family. EF-G/EF-2 subfamily.

It localises to the mitochondrion. In terms of biological role, mitochondrial GTPase that mediates the disassembly of ribosomes from messenger RNA at the termination of mitochondrial protein biosynthesis. Not involved in the GTP-dependent ribosomal translocation step during translation elongation. The sequence is that of Ribosome-releasing factor 2, mitochondrial (mef2) from Talaromyces stipitatus (strain ATCC 10500 / CBS 375.48 / QM 6759 / NRRL 1006) (Penicillium stipitatum).